Reading from the N-terminus, the 82-residue chain is Beta-defensin 119 (82 aa).

The signal sequence occupies residues 1–19 (MKFFLFFVILLAMEPVISG). Intrachain disulfides connect Cys26-Cys53, Cys33-Cys47, and Cys37-Cys54.

Belongs to the beta-defensin family.

It localises to the secreted. In terms of biological role, has antibacterial activity. The sequence is that of Beta-defensin 119 (DEFB119) from Canis lupus familiaris (Dog).